Consider the following 310-residue polypeptide: Acetylglutamate kinase (310 aa).

Substrate is bound by residues 83–84 (GG), arginine 105, and asparagine 207.

The protein belongs to the acetylglutamate kinase family. ArgB subfamily.

Its subcellular location is the cytoplasm. It catalyses the reaction N-acetyl-L-glutamate + ATP = N-acetyl-L-glutamyl 5-phosphate + ADP. It participates in amino-acid biosynthesis; L-arginine biosynthesis; N(2)-acetyl-L-ornithine from L-glutamate: step 2/4. Its function is as follows. Catalyzes the ATP-dependent phosphorylation of N-acetyl-L-glutamate. This Ralstonia nicotianae (strain ATCC BAA-1114 / GMI1000) (Ralstonia solanacearum) protein is Acetylglutamate kinase.